Reading from the N-terminus, the 269-residue chain is E3 ubiquitin-protein ligase complex slx8-rfp subunit slx8 (269 aa).

Residues 1 to 10 are compositionally biased toward basic and acidic residues; the sequence is MPPAHKRDTN. Disordered regions lie at residues 1-75 and 166-196; these read MPPA…LNRA and PRKQKFEQGKNPSTTNAEIEKEEPSKKQVVP. A compositionally biased stretch (polar residues) spans 60 to 70; the sequence is PSGTTSENESL. An RING-type zinc finger spans residues 206-247; it reads CVICLDSPENLSCTPCGHIFCNFCILSALGTTAATQKCPVCR.

As to quaternary structure, part of an E3 ubiquitin complex including rfp1, rfp2 and slx8. Interacts with rfp1 and rfp2.

Its subcellular location is the nucleus. The catalysed reaction is S-ubiquitinyl-[E2 ubiquitin-conjugating enzyme]-L-cysteine + [acceptor protein]-L-lysine = [E2 ubiquitin-conjugating enzyme]-L-cysteine + N(6)-ubiquitinyl-[acceptor protein]-L-lysine.. Its pathway is protein modification; protein ubiquitination. Functionally, mediates ubiquitination and subsequent desumoylation/degradation of sumoylated proteins and proteins containing SUMO-like domains. Acts as a critical suppressor of gross chromosomal rearrangements (GCRs) during normal cell cycle progression. Involved in stabilizing, restarting or resolving transiently stalled replication forks. Prevents accumulation of DNA damage during cell cycle progression. In Schizosaccharomyces pombe (strain 972 / ATCC 24843) (Fission yeast), this protein is E3 ubiquitin-protein ligase complex slx8-rfp subunit slx8 (slx8).